A 394-amino-acid chain; its full sequence is Ceramide glucosyltransferase-B (394 aa).

The Lumenal portion of the chain corresponds to 1 to 10 (MAVLDLALQG). The chain crosses the membrane as a helical span at residues 11–32 (LAIFGCILFFVLWFMHFLSIVY). Topologically, residues 33-195 (TRLHLNKKVS…QVYFGTSHPR (163 aa)) are cytoplasmic. Position 92 (aspartate 92) is a short sequence motif, D1. Position 144 (aspartate 144) is a short sequence motif, D2. The chain crosses the membrane as a helical span at residues 196–215 (SYISANVTGIKCVTGMSCLM). At 216 to 287 (RKEVLDQAGG…KLRINMLPAT (72 aa)) the chain is on the lumenal side. A short sequence motif (D3) is located at residue aspartate 236. The active-site Proton acceptor is aspartate 236. The (Q/R)XXRW motif lies at 272–276 (RMIRW). A helical membrane pass occupies residues 288-304 (IICEPISECFVASLIIG). Topologically, residues 305 to 309 (WAAHH) are cytoplasmic. A helical transmembrane segment spans residues 310-328 (IFRWDIMVFFMCHCLAWFI). Over 329-348 (FDYIQLRGVQGGPLNFSKLD) the chain is Lumenal. Residues 349-369 (YAVAWFIRESMTIYIFLSALW) traverse the membrane as a helical segment. At 370–394 (DPTISWRTGRYRLRCGGTAEEILDV) the chain is on the cytoplasmic side.

It belongs to the glycosyltransferase 2 family.

The protein resides in the golgi apparatus membrane. It carries out the reaction an N-acylsphing-4-enine + UDP-alpha-D-glucose = a beta-D-glucosyl-(1&lt;-&gt;1')-N-acylsphing-4-enine + UDP + H(+). It catalyses the reaction UDP-alpha-D-xylose + an N-acylsphing-4-enine = a beta-D-xylosyl-(1&lt;-&gt;1')-N-acylsphing-4-enine + UDP + H(+). The catalysed reaction is N-(9Z-octadecenoyl)-sphing-4-enine + UDP-alpha-D-xylose = beta-D-xylosyl-(1&lt;-&gt;1')-N-(9Z-octadecenoyl)-sphing-4-enine + UDP + H(+). It participates in lipid metabolism; sphingolipid metabolism. In terms of biological role, participates in the initial step of the glucosylceramide-based glycosphingolipid/GSL synthetic pathway at the cytosolic surface of the Golgi. Catalyzes the transfer of glucose from UDP-glucose to ceramide to produce glucosylceramide/GlcCer (such as beta-D-glucosyl-(1&lt;-&gt;1')-N-acylsphing-4-enine). Glucosylceramide is the core component of glycosphingolipids/GSLs, amphipathic molecules consisting of a ceramide lipid moiety embedded in the outer leaflet of the membrane, linked to one of hundreds of different externally oriented oligosaccharide structures. Glycosphingolipids are essential components of membrane microdomains that mediate membrane trafficking and signal transduction. They are implicated in many fundamental cellular processes, including growth, differentiation, migration, morphogenesis, cell-to-cell and cell-to-matrix interactions. Catalyzes the synthesis of xylosylceramide/XylCer (such as beta-D-xylosyl-(1&lt;-&gt;1')-N-acylsphing-4-enine) using UDP-Xyl as xylose donor. This Xenopus laevis (African clawed frog) protein is Ceramide glucosyltransferase-B (ugcg-b).